The sequence spans 334 residues: G-protein coupled receptor 12 (334 aa).

The Extracellular segment spans residues 1 to 48 (MNEDLKVNLSGLPRDYLDAAAAENISAAVSSRVPAVEPEPELVVNPWD). 2 N-linked (GlcNAc...) asparagine glycosylation sites follow: N8 and N24. Residues 49–69 (IVLCTSGTLISCENAIVVLII) traverse the membrane as a helical segment. At 70-77 (FHNPSLRA) the chain is on the cytoplasmic side. Residues 78–98 (PMFLLIGSLALADLLAGIGLI) traverse the membrane as a helical segment. At 99–113 (TNFVFAYLLQSEATK) the chain is on the extracellular side. Residues 114–134 (LVTIGLIVASFSASVCSLLAI) traverse the membrane as a helical segment. The Cytoplasmic portion of the chain corresponds to 135–158 (TVDRYLSLYYALTYHSERTVTFTY). A helical transmembrane segment spans residues 159 to 179 (VMLVMLWGTSICLGLLPVMGW). Residues 180 to 199 (NCLRDESTCSVVRPLTKNNA) are Extracellular-facing. The helical transmembrane segment at 200-220 (AILSVSFLFMFALMLQLYIQI) threads the bilayer. The Cytoplasmic segment spans residues 221–252 (CKIVMRHAHQIALQHHFLATSHYVTTRKGVST). Residues 253–273 (LAIILGTFAACWMPFTLYSLI) form a helical membrane-spanning segment. Residues 274 to 282 (ADYTYPSIY) lie on the Extracellular side of the membrane. Residues 283–303 (TYATLLPATYNSIINPVIYAF) form a helical membrane-spanning segment. At 304–334 (RNQEIQKALCLICCGCIPSSLAQRARSPSDV) the chain is on the cytoplasmic side. The S-palmitoyl cysteine moiety is linked to residue C317. A phosphoserine mark is found at S330 and S332.

It belongs to the G-protein coupled receptor 1 family.

It localises to the cell membrane. In terms of biological role, promotes neurite outgrowth and blocks myelin inhibition in neurons. Receptor with constitutive G(s) signaling activity that stimulates cyclic AMP production. The chain is G-protein coupled receptor 12 (GPR12) from Homo sapiens (Human).